A 162-amino-acid polypeptide reads, in one-letter code: Peroxiredoxin-2C (162 aa).

The Thioredoxin domain maps to 4-162 (VAVGDTLPDG…SGAEEILKAL (159 aa)). Residue C51 is the Cysteine sulfenic acid (-SOH) intermediate of the active site.

The protein belongs to the peroxiredoxin family. Prx5 subfamily. Monomer.

Its subcellular location is the cytoplasm. It carries out the reaction [glutaredoxin]-dithiol + a hydroperoxide = [glutaredoxin]-disulfide + an alcohol + H2O. Reduces hydrogen peroxide and alkyl hydroperoxides with reducing equivalents provided through the thioredoxin or glutaredoxin system. May be involved in intracellular redox signaling. In terms of biological role, thiol-specific peroxidase that catalyzes the reduction of hydrogen peroxide and organic hydroperoxides to water and alcohols, respectively. Plays a role in cell protection against oxidative stress by detoxifying peroxides. The sequence is that of Peroxiredoxin-2C (PRXIIC) from Oryza sativa subsp. japonica (Rice).